A 217-amino-acid polypeptide reads, in one-letter code: GTP cyclohydrolase 1 (217 aa).

Positions 109, 112, and 180 each coordinate Zn(2+).

The protein belongs to the GTP cyclohydrolase I family. In terms of assembly, toroid-shaped homodecamer, composed of two pentamers of five dimers.

The catalysed reaction is GTP + H2O = 7,8-dihydroneopterin 3'-triphosphate + formate + H(+). It functions in the pathway cofactor biosynthesis; 7,8-dihydroneopterin triphosphate biosynthesis; 7,8-dihydroneopterin triphosphate from GTP: step 1/1. The sequence is that of GTP cyclohydrolase 1 from Vibrio campbellii (strain ATCC BAA-1116).